A 408-amino-acid polypeptide reads, in one-letter code: uncharacterized protein (408 aa).

Residues Glu-35, Asp-61, and Asn-96 each contribute to the a divalent metal cation site.

This sequence belongs to the metallophosphoesterase superfamily. The cofactor is a divalent metal cation.

This is an uncharacterized protein from Bacillus subtilis (strain 168).